We begin with the raw amino-acid sequence, 288 residues long: Quinate/shikimate dehydrogenase (288 aa).

Substrate-binding residues include Lys-71 and Asp-107. NAD(+)-binding positions include 132–135 (AGGA), 155–158 (NRRD), Lys-205, 232–235 (CVYN), and Gly-255.

Belongs to the shikimate dehydrogenase family. In terms of assembly, homodimer.

The enzyme catalyses L-quinate + NAD(+) = 3-dehydroquinate + NADH + H(+). It carries out the reaction L-quinate + NADP(+) = 3-dehydroquinate + NADPH + H(+). It catalyses the reaction shikimate + NADP(+) = 3-dehydroshikimate + NADPH + H(+). The catalysed reaction is shikimate + NAD(+) = 3-dehydroshikimate + NADH + H(+). Its pathway is metabolic intermediate biosynthesis; chorismate biosynthesis; chorismate from D-erythrose 4-phosphate and phosphoenolpyruvate: step 4/7. In terms of biological role, the actual biological function of YdiB remains unclear, nor is it known whether 3-dehydroshikimate or quinate represents the natural substrate. Catalyzes the reversible NAD-dependent reduction of both 3-dehydroshikimate (DHSA) and 3-dehydroquinate to yield shikimate (SA) and quinate, respectively. It can use both NAD or NADP for catalysis, however it has higher catalytic efficiency with NAD. This Shigella flexneri protein is Quinate/shikimate dehydrogenase.